The following is a 448-amino-acid chain: Exodeoxyribonuclease 7 large subunit (448 aa).

Belongs to the XseA family. In terms of assembly, heterooligomer composed of large and small subunits.

It is found in the cytoplasm. The catalysed reaction is Exonucleolytic cleavage in either 5'- to 3'- or 3'- to 5'-direction to yield nucleoside 5'-phosphates.. Functionally, bidirectionally degrades single-stranded DNA into large acid-insoluble oligonucleotides, which are then degraded further into small acid-soluble oligonucleotides. In Shewanella sp. (strain MR-7), this protein is Exodeoxyribonuclease 7 large subunit.